The chain runs to 247 residues: Syntaxin-like protein fsv1 (247 aa).

Positions 27-94 (NPDEEIESSL…FEKQRRASSI (68 aa)) form a coiled coil. The segment at 88–130 (QRRASSIPADGTSAFSANPQVASTNNKLTPLPSLQKTTSSSEG) is disordered. Over residues 100-130 (SAFSANPQVASTNNKLTPLPSLQKTTSSSEG) the composition is skewed to polar residues. Residues 159 to 221 (QQMLNEQEES…DHAKNRLNKV (63 aa)) enclose the t-SNARE coiled-coil homology domain.

It localises to the golgi apparatus membrane. The protein resides in the prevacuolar compartment membrane. Functionally, involved in vesicle-mediated protein transport between the Golgi and the vacuole. This is Syntaxin-like protein fsv1 (fsv1) from Schizosaccharomyces pombe (strain 972 / ATCC 24843) (Fission yeast).